A 317-amino-acid polypeptide reads, in one-letter code: Transaldolase A (317 aa).

Lysine 132 serves as the catalytic Schiff-base intermediate with substrate.

This sequence belongs to the transaldolase family. Type 1 subfamily. Homodimer.

It is found in the cytoplasm. It carries out the reaction D-sedoheptulose 7-phosphate + D-glyceraldehyde 3-phosphate = D-erythrose 4-phosphate + beta-D-fructose 6-phosphate. It participates in carbohydrate degradation; pentose phosphate pathway; D-glyceraldehyde 3-phosphate and beta-D-fructose 6-phosphate from D-ribose 5-phosphate and D-xylulose 5-phosphate (non-oxidative stage): step 2/3. Transaldolase is important for the balance of metabolites in the pentose-phosphate pathway. The protein is Transaldolase A (talA) of Pasteurella multocida (strain Pm70).